A 549-amino-acid polypeptide reads, in one-letter code: Efflux pump patC (549 aa).

Residues 1–12 (MAESTAHTSPSL) are compositionally biased toward polar residues. Residues 1 to 40 (MAESTAHTSPSLNDKEREVDQGILSDESGPAEEVKETPDQ) form a disordered region. A run of 14 helical transmembrane segments spans residues 50–70 (LLIC…NTIV), 85–105 (AQLG…ILPL), 116–136 (WLFI…GGAP), 146–166 (VWAG…ITIL), 178–198 (LVGL…GAFA), 206–226 (WGFY…VFLL), 252–272 (VLSA…GVMW), 282–302 (LYVV…FCVL), 321–341 (IALY…VYYI), 360–380 (LLPF…LMPK), 385–405 (VLWY…MYTV), 419–439 (ILLG…PSLV), 460–482 (LLGL…NALL), and 526–546 (VYVM…FLPW).

Belongs to the major facilitator superfamily. TCR/Tet family.

Its subcellular location is the vacuole membrane. It localises to the cell membrane. In terms of biological role, efflux pump; part of the gene cluster that mediates the biosynthesis of patulin, an acetate-derived tetraketide mycotoxin produced by several fungal species that shows antimicrobial properties against several bacteria. May be involved in the secretion of E-ascladiol to be converted to patulin by the secreted patulin synthase patE. The chain is Efflux pump patC from Aspergillus clavatus (strain ATCC 1007 / CBS 513.65 / DSM 816 / NCTC 3887 / NRRL 1 / QM 1276 / 107).